Consider the following 230-residue polypeptide: Probable septum site-determining protein MinC (230 aa).

Belongs to the MinC family. In terms of assembly, interacts with MinD and FtsZ.

In terms of biological role, cell division inhibitor that blocks the formation of polar Z ring septums. Rapidly oscillates between the poles of the cell to destabilize FtsZ filaments that have formed before they mature into polar Z rings. Prevents FtsZ polymerization. In Cronobacter sakazakii (strain ATCC BAA-894) (Enterobacter sakazakii), this protein is Probable septum site-determining protein MinC.